The chain runs to 1522 residues: Adhesion G protein-coupled receptor B3 (1522 aa).

Residues 1-25 (MKAVRNLLIYIFSTYLLVMFGFNAA) form the signal peptide. Residues 26-880 (QDFWCSTLVK…MESSGTPSVT (855 aa)) lie on the Extracellular side of the membrane. The 130-residue stretch at 30–159 (CSTLVKGVIY…KSFFEFLVLN (130 aa)) folds into the CUB domain. Asparagine 51, asparagine 54, asparagine 82, asparagine 105, and asparagine 241 each carry an N-linked (GlcNAc...) asparagine glycan. 4 TSP type-1 domains span residues 291 to 343 (ESGV…ALCP), 345 to 398 (HGVW…ALCP), 400 to 453 (DGQW…PECT), and 455 to 508 (NGQW…QRCP). 14 disulfide bridges follow: cysteine 303-cysteine 336, cysteine 307-cysteine 342, cysteine 318-cysteine 326, cysteine 357-cysteine 392, cysteine 361-cysteine 397, cysteine 372-cysteine 382, cysteine 412-cysteine 447, cysteine 416-cysteine 452, cysteine 427-cysteine 437, cysteine 467-cysteine 502, cysteine 471-cysteine 507, cysteine 482-cysteine 492, cysteine 514-cysteine 549, and cysteine 537-cysteine 567. The N-linked (GlcNAc...) asparagine glycan is linked to asparagine 337. N-linked (GlcNAc...) asparagine glycosylation is present at asparagine 418. Asparagine 540 carries N-linked (GlcNAc...) asparagine glycosylation. Serine 619 carries the post-translational modification Phosphoserine. N-linked (GlcNAc...) asparagine glycosylation is found at asparagine 625, asparagine 779, asparagine 812, and asparagine 828. The region spanning 693-869 (QNSYLMTGNV…AILAQQPREI (177 aa)) is the GAIN-B domain. 2 disulfides stabilise this stretch: cysteine 819–cysteine 851 and cysteine 839–cysteine 853. Residues 819–869 (CVLWDDSKSNESLGTWSTQGCKTVLTDASHTKCLCDRLSTFAILAQQPREI) are GPS. Residues 881-901 (LIVGSGLSCLALITLAVVYAA) traverse the membrane as a helical segment. Over 902-910 (LWRYIRSER) the chain is Cytoplasmic. The helical transmembrane segment at 911-931 (SIILINFCLSIISSNILILVG) threads the bilayer. Topologically, residues 932–939 (QTQTHNKS) are extracellular. The N-linked (GlcNAc...) asparagine glycan is linked to asparagine 937. Residues 940 to 960 (ICTTTTAFLHFFFLASFCWVL) traverse the membrane as a helical segment. Residues 961 to 981 (TEAWQSYMAVTGKIRTRLIRK) are Cytoplasmic-facing. A helical transmembrane segment spans residues 982-1002 (RFLCLGWGLPALVVATSVGFT). At 1003–1023 (RTKGYGTDHYCWLSLEGGLLY) the chain is on the extracellular side. A helical transmembrane segment spans residues 1024 to 1044 (AFVGPAAAVVLVNMVIGILVF). The Cytoplasmic segment spans residues 1045 to 1098 (NKLVSRDGILDKKLKHRAGQMSEPHSGLTLKCAKCGVVSTTALSATTASNAMAS). Residues 1099 to 1119 (LWSSCVVLPLLALTWMSAVLA) form a helical membrane-spanning segment. Topologically, residues 1120-1125 (MTDKRS) are extracellular. Residues 1126–1146 (ILFQILFAVFDSLQGFVIVMV) form a helical membrane-spanning segment. Over 1147-1522 (HCILRREVQD…VQEGDFQTEV (376 aa)) the chain is Cytoplasmic. A phosphoserine mark is found at serine 1220 and serine 1411.

The protein belongs to the G-protein coupled receptor 2 family. Adhesion G-protein coupled receptor (ADGR) subfamily. Forms a heterodimer, consisting of a large extracellular region non-covalently linked to a seven-transmembrane moiety. Interacts (via its TSRs) with C1QL1, C1QL2, C1QL3 and C1QL4. Interacts via (C-terminus) with ELMO1, ELMO2 and ELMO3. Post-translationally, the endogenous protein is proteolytically cleaved into 2 subunits, an extracellular subunit and a seven-transmembrane subunit. As to expression, brain-specific expression.

It localises to the cell membrane. Receptor that plays a role in the regulation of synaptogenesis and dendritic spine formation at least partly via interaction with ELMO1 and RAC1 activity. Promotes myoblast fusion through ELMO/DOCK1. The sequence is that of Adhesion G protein-coupled receptor B3 (Adgrb3) from Mus musculus (Mouse).